The following is a 231-amino-acid chain: 7-cyano-7-deazaguanine synthase (231 aa).

8–18 (FSGGQDSTTCL) contacts ATP. Positions 188, 197, 200, and 203 each coordinate Zn(2+).

This sequence belongs to the QueC family. Zn(2+) serves as cofactor.

The enzyme catalyses 7-carboxy-7-deazaguanine + NH4(+) + ATP = 7-cyano-7-deazaguanine + ADP + phosphate + H2O + H(+). It participates in purine metabolism; 7-cyano-7-deazaguanine biosynthesis. In terms of biological role, catalyzes the ATP-dependent conversion of 7-carboxy-7-deazaguanine (CDG) to 7-cyano-7-deazaguanine (preQ(0)). The sequence is that of 7-cyano-7-deazaguanine synthase from Salmonella newport (strain SL254).